The sequence spans 356 residues: Hyaluronan and proteoglycan link protein 1 (356 aa).

The propeptide occupies 1–9 (MRSLLLLVL). Positions 40-154 (PRLLVEAEQA…EGLEDDTAVV (115 aa)) constitute an Ig-like V-type domain. Asn-58 carries an N-linked (GlcNAc...) asparagine glycan. Intrachain disulfides connect Cys-63–Cys-141, Cys-183–Cys-254, Cys-207–Cys-228, Cys-281–Cys-351, and Cys-306–Cys-327. Link domains lie at 161-256 (VVFP…FCFT) and 261-353 (GRFY…YCFR).

The protein belongs to the HAPLN family. Ubiquitously expressed.

It localises to the secreted. It is found in the extracellular space. The protein localises to the extracellular matrix. Stabilizes the aggregates of proteoglycan monomers with hyaluronic acid in the extracellular cartilage matrix. The sequence is that of Hyaluronan and proteoglycan link protein 1 (Hapln1) from Mus musculus (Mouse).